Consider the following 380-residue polypeptide: MASLAAANAEFGFDLFREMDSSQGNGNVFFSSLSIFTALTLIRLGARGDCARQIDKALHFNIPSRQGNSSNNQPGLQYQLKRVLADINSSHKDYELSIATGVFAEKVYDFHKNYIECAENLYNAKVERVDFTNDVQDTRFKINKWIENETHGKIKKVLGDSSLSSSAVMVLVNAVYFKGKWKSAFTKTDTLSCRFRSPTCPGKVVNMMHQERRFNLSTIQQPPMQVLELQYHGGISMYIMLPEDGLCEIESKLSFQNLMDWTNRRKMKSQYVNVFLPQFKIEKNYEMTHHLKSLGLKDIFDESSADLSGIASGGRLYVSKLMHKSFIEVSEEGTEATAATENNIVEKQLPESTVFRADRPFLFVIKKNDIILFTGKVSCP.

Residue S217 is modified to Phosphoserine.

It belongs to the serpin family. Ov-serpin subfamily.

Its subcellular location is the cytoplasm. Functionally, might function as an inhibitor of Lys-specific proteases. Might influence the maturation of megakaryocytes via its action as a serpin. This is Serpin B7 (Serpinb7) from Mus musculus (Mouse).